Reading from the N-terminus, the 402-residue chain is MKAAYLDCFSGISGDMLLGALVDAGLDFNLLQRDLAGLDLDEYELYEQKVLKQGIRGTQIHVHALEGHVHRHLSDIQAIIGRSALPPQVKEKSLEIFTRLGKAEAKIHGTDIEQIHFHEVGAVDAIVDIVGAVIGFWRLGIEKVFASPIHVGKGFVKAAHGLLPVPAPATLELLTGVPIYAQDVEGELATPPGAAIVTAYCREFGPFPKIRVERVGYGAGVKDLTIPNLLRLTVGELADEDKGQEGIREGEALTLEVNIDDMNPECYDYLFEKLFQAGAMDVYIQTIQMKKNRPAVLLTVQTPYHKLEEMRRILFQETTTIGLRVYPIKKYMLPYELLTVETNYGSAKVKVAFMEGRACTVSPEYEDCRRLARLTGEPLKQIYEEIKEKAKILLYSTKYPMD.

This sequence belongs to the LarC family.

The enzyme catalyses Ni(II)-pyridinium-3,5-bisthiocarboxylate mononucleotide = pyridinium-3,5-bisthiocarboxylate mononucleotide + Ni(2+). Functionally, involved in the biosynthesis of a nickel-pincer cofactor ((SCS)Ni(II) pincer complex). Binds Ni(2+), and functions in nickel delivery to pyridinium-3,5-bisthiocarboxylic acid mononucleotide (P2TMN), to form the mature cofactor. Is thus probably required for the activation of nickel-pincer cofactor-dependent enzymes. The sequence is that of Pyridinium-3,5-bisthiocarboxylic acid mononucleotide nickel insertion protein from Desulfitobacterium hafniense (strain Y51).